A 338-amino-acid chain; its full sequence is Protein RecA (338 aa).

68-75 (GPESSGKT) serves as a coordination point for ATP.

It belongs to the RecA family.

It localises to the cytoplasm. Its function is as follows. Can catalyze the hydrolysis of ATP in the presence of single-stranded DNA, the ATP-dependent uptake of single-stranded DNA by duplex DNA, and the ATP-dependent hybridization of homologous single-stranded DNAs. It interacts with LexA causing its activation and leading to its autocatalytic cleavage. The protein is Protein RecA of Citrifermentans bemidjiense (strain ATCC BAA-1014 / DSM 16622 / JCM 12645 / Bem) (Geobacter bemidjiensis).